The sequence spans 1004 residues: Kinesin-like protein KIN-14R (1004 aa).

Disordered regions lie at residues 1-21 (MEEE…RIGD), 61-90 (PYVD…MQHD), and 110-169 (ELFS…ATMG). Residues 63-75 (VDDDDDGNSEEEN) show a composition bias toward acidic residues. Over residues 115-125 (PSPPQGPPSPS) the composition is skewed to pro residues. Coiled coils occupy residues 189–230 (CGQL…AQAS) and 266–338 (LNDL…LYNK). The 327-residue stretch at 345–671 (NIRVFCRCRP…LNFASRVRGI (327 aa)) folds into the Kinesin motor domain. ATP is bound at residue 428–435 (GQTGTGKT). Residues 691-742 (MAGRAKQDSKNKDAQIKSMEETIQSLEAKNKAKDLLTMNLQEKIKELEAQLL) are a coiled coil. Disordered stretches follow at residues 759 to 791 (DHLH…STAE) and 946 to 1004 (SGRR…RQLN). Residues 948–958 (RRAGAGVAGTT) are compositionally biased toward low complexity. Positions 995-1004 (NNGTSLRQLN) are enriched in polar residues.

The protein belongs to the TRAFAC class myosin-kinesin ATPase superfamily. Kinesin family. KIN-14 subfamily.

The chain is Kinesin-like protein KIN-14R from Oryza sativa subsp. japonica (Rice).